Consider the following 137-residue polypeptide: Large ribosomal subunit protein uL16 (137 aa).

Belongs to the universal ribosomal protein uL16 family. As to quaternary structure, part of the 50S ribosomal subunit.

Functionally, binds 23S rRNA and is also seen to make contacts with the A and possibly P site tRNAs. This is Large ribosomal subunit protein uL16 from Stutzerimonas stutzeri (strain A1501) (Pseudomonas stutzeri).